The sequence spans 246 residues: tRNA pseudouridine synthase A (246 aa).

Residue Asp54 is the Nucleophile of the active site. Tyr112 provides a ligand contact to substrate.

The protein belongs to the tRNA pseudouridine synthase TruA family. As to quaternary structure, homodimer.

The enzyme catalyses uridine(38/39/40) in tRNA = pseudouridine(38/39/40) in tRNA. In terms of biological role, formation of pseudouridine at positions 38, 39 and 40 in the anticodon stem and loop of transfer RNAs. The protein is tRNA pseudouridine synthase A of Moorella thermoacetica (strain ATCC 39073 / JCM 9320).